Here is a 223-residue protein sequence, read N- to C-terminus: Cytotoxic T-lymphocyte protein 4 (223 aa).

The first 35 residues, methionine 1–serine 35, serve as a signal peptide directing secretion. Residues methionine 38–aspartate 161 lie on the Extracellular side of the membrane. The region spanning histidine 39–tyrosine 140 is the Ig-like V-type domain. A homodimerization region spans residues valine 46–serine 50. 2 disulfide bridges follow: cysteine 58–cysteine 129 and cysteine 85–cysteine 103. N-linked (GlcNAc...) asparagine glycosylation is present at asparagine 113. The important for interaction with CD80 and CD86 stretch occupies residues leucine 134–tyrosine 139. The N-linked (GlcNAc...) asparagine glycan is linked to asparagine 145. Residues tyrosine 150–glutamate 155 are homodimerization. A helical membrane pass occupies residues phenylalanine 162–threonine 182. Residues alanine 183–asparagine 223 are Cytoplasmic-facing. The residue at position 201 (tyrosine 201) is a Phosphotyrosine; by TXK and JAK2.

Homodimer; disulfide-linked. Binds to CD80/B7-1 and CD86/B7.2. Interacts with ICOSLG. In terms of processing, N-glycosylation is important for dimerization. Phosphorylation at Tyr-201 prevents binding to the AP-2 adapter complex, blocks endocytosis, and leads to retention of CTLA4 on the cell surface.

It is found in the cell membrane. Inhibitory receptor acting as a major negative regulator of T-cell responses. The affinity of CTLA4 for its natural B7 family ligands, CD80 and CD86, is considerably stronger than the affinity of their cognate stimulatory coreceptor CD28. This Sus scrofa (Pig) protein is Cytotoxic T-lymphocyte protein 4 (CTLA4).